Reading from the N-terminus, the 328-residue chain is MTEILPHVNDEVLPAEYELNQPEPEHCPGPESDMAGKSDACGGCANKEICESLPKGPDPDIPLITDNLSGIEHKILVLSGKGGVGKSTFAAMLSWALSADEDLQVGAMDLDICGPSLPHMLGCIKETVHESNSGWTPVYVTDNLATMSIQYMLPEDDSAIIWRGSKKNLLIKKFLKDVDWDKLDYLVIDTPPGTSDEHISINKYMRESGIDGALVVTTPQEVALLDVRKEIDFCKKAGINILGLVENMSGFVCPNCKGESQIFKATTGGGEALCKELGIKFLGSVPLDPRIGKSCDMGESFLDNYPDSPASSAVLNVVEALRDAVGDV.

[4Fe-4S] cluster is bound by residues C27, C41, C44, and C50. Residue 80–87 (GKGGVGKS) coordinates ATP. Residues C253 and C256 each coordinate [4Fe-4S] cluster.

It belongs to the Mrp/NBP35 ATP-binding proteins family. NUBP1/NBP35 subfamily. In terms of assembly, heterotetramer of 2 NBP35 and 2 CFD1 chains. [4Fe-4S] cluster is required as a cofactor.

It localises to the cytoplasm. The protein localises to the nucleus. Its function is as follows. Component of the cytosolic iron-sulfur (Fe/S) protein assembly (CIA) machinery. Required for maturation of extramitochondrial Fe-S proteins. The NBP35-CFD1 heterotetramer forms a Fe-S scaffold complex, mediating the de novo assembly of an Fe-S cluster and its transfer to target apoproteins. Required for biogenesis and export of both ribosomal subunits, which may reflect a role in assembly of the Fe/S clusters in RLI1, a protein which performs rRNA processing and ribosome export. This chain is Cytosolic Fe-S cluster assembly factor NBP35, found in Saccharomyces cerevisiae (strain ATCC 204508 / S288c) (Baker's yeast).